The chain runs to 215 residues: Ras-related protein SEC4 (215 aa).

Residue 27–34 (GDSGVGKS) participates in GTP binding. An Effector region motif is present at residues 49–57 (FITTIGIDF). GTP-binding positions include 75 to 79 (DTAGQ) and 133 to 136 (NKSD). Phosphoserine occurs at positions 201 and 204. 2 S-geranylgeranyl cysteine lipidation sites follow: C214 and C215.

It belongs to the small GTPase superfamily. Rab family. Interacts with the guanyl-nucleotide exchange factor SEC2. Interacts with SRO7, YIF1, YIP3, YIP4 and YIP5.

The protein resides in the cytoplasmic vesicle. Its subcellular location is the secretory vesicle membrane. It localises to the cell membrane. It is found in the cytoplasm. Involved in exocytosis. Maybe by regulating the binding and fusion of secretory vesicles with the cell surface. The GTP-bound form of SEC4 may interact with an effector, thereby stimulating its activity and leading to exocytotic fusion. SEC4 may be an upstream activator of the 19.5S SEC8/SEC15 particle. SEC4 probably interacts directly with SEC8; it could serve as the attachment site for the SEC8/SEC15 particle. The protein is Ras-related protein SEC4 (SEC4) of Saccharomyces cerevisiae (strain ATCC 204508 / S288c) (Baker's yeast).